The sequence spans 160 residues: Ribosomal RNA large subunit methyltransferase H (160 aa).

The tract at residues 44 to 63 (LPESRASNSATRKREEAVQI) is disordered. S-adenosyl-L-methionine-binding positions include L76, G108, and 127 to 132 (LGKMTW).

Belongs to the RNA methyltransferase RlmH family. As to quaternary structure, homodimer.

It is found in the cytoplasm. The catalysed reaction is pseudouridine(1915) in 23S rRNA + S-adenosyl-L-methionine = N(3)-methylpseudouridine(1915) in 23S rRNA + S-adenosyl-L-homocysteine + H(+). Functionally, specifically methylates the pseudouridine at position 1915 (m3Psi1915) in 23S rRNA. This chain is Ribosomal RNA large subunit methyltransferase H, found in Allorhizobium ampelinum (strain ATCC BAA-846 / DSM 112012 / S4) (Agrobacterium vitis (strain S4)).